The sequence spans 209 residues: Casparian strip membrane protein 1 (209 aa).

Topologically, residues 1–46 are cytoplasmic; the sequence is MSSGANATTIDVPETRAEAKGKAPLIAAPIVATTKATPHPNAGWKK. The chain crosses the membrane as a helical span at residues 47-67; sequence GLAIFDFLLRLAAIAATLAAA. The Extracellular portion of the chain corresponds to 68–95; the sequence is TTMGTTDETLPFFTQFFQFQASFDDLPA. A helical membrane pass occupies residues 96–116; the sequence is FMFFVVATAIASGYLALSLPF. Residues 117–137 are Cytoplasmic-facing; the sequence is SLVSIFRPHAQGIRLLLIISD. A helical transmembrane segment spans residues 138–158; it reads TVMLALTTAGAASATAIVYLA. The Extracellular segment spans residues 159–183; that stretch reads HNGDSSANWIAICQQFTDFCQSVSG. Residues 184 to 204 form a helical membrane-spanning segment; the sequence is AVVASFIAVVIFMLLVMMSAL. The Cytoplasmic segment spans residues 205-209; that stretch reads ALRKH.

Belongs to the Casparian strip membrane proteins (CASP) family. In terms of assembly, homodimer and heterodimers.

It is found in the cell membrane. Its function is as follows. Regulates membrane-cell wall junctions and localized cell wall deposition. Required for establishment of the Casparian strip membrane domain (CSD) and the subsequent formation of Casparian strips, a cell wall modification of the root endodermis that determines an apoplastic barrier between the intraorganismal apoplasm and the extraorganismal apoplasm and prevents lateral diffusion. The sequence is that of Casparian strip membrane protein 1 from Vitis vinifera (Grape).